We begin with the raw amino-acid sequence, 147 residues long: Receptor activity-modifying protein 3 (147 aa).

An N-terminal signal peptide occupies residues 1–22; sequence MATPAQRLHLLPLLLLLCGECA. At 23–112 the chain is on the extracellular side; it reads QVCGCNETGM…CTVDRTHWED (90 aa). Residues Asn-28, Asn-57, Asn-70, and Asn-102 are each glycosylated (N-linked (GlcNAc...) asparagine). 2 cysteine pairs are disulfide-bonded: Cys-39/Cys-71 and Cys-56/Cys-103. Residues 113–137 form a helical membrane-spanning segment; the sequence is PPDEVLIPLIAVPVLLTVAMAGLVV. Over 138–147 the chain is Cytoplasmic; that stretch reads WRSKRTDRLL.

It belongs to the RAMP family. As to quaternary structure, heterodimer of CALCRL and RAMP3; interaction induces allosteric modulation of CALCRL function and ligand specificity for adrenomedullin/ADM and intermedin/ADM2. Heterodimer of CALCR and RAMP3; interaction form the receptor complex AMYR3 for amylin/IAPP. Interacts with GPER1.

The protein resides in the cell membrane. The protein localises to the membrane. Accessory protein that interacts with and modulates the function of G-protein coupled receptors including calcitonin gene-related peptide type 1 receptor (CALCRL), calcitonin receptor (CALCR) and G-protein coupled estrogen receptor 1 (GPER1). Required for the transport of CALCRL and GPER1 receptors to the plasma membrane. Plays a role in cardioprotection by reducing cardiac hypertrophy and perivascular fibrosis in a GPER1-dependent manner. Together with CALCRL, form a receptor complex for adrenomedullin/ADM and intermedin/ADM2. Together with CALCR, act as a receptor complex for amylin/IAPP. This is Receptor activity-modifying protein 3 from Rattus norvegicus (Rat).